Consider the following 88-residue polypeptide: Small ribosomal subunit protein bS20 (88 aa).

Belongs to the bacterial ribosomal protein bS20 family.

Functionally, binds directly to 16S ribosomal RNA. In Oenococcus oeni (strain ATCC BAA-331 / PSU-1), this protein is Small ribosomal subunit protein bS20.